Consider the following 238-residue polypeptide: Laccase-S (238 aa).

2 consecutive Plastocyanin-like domains span residues 4–87 (NVIA…YDPA) and 100–238 (HTII…IARY). N-linked (GlcNAc...) asparagine glycosylation occurs at asparagine 8. Residues histidine 21, histidine 23, histidine 66, and histidine 68 each contribute to the Cu cation site. Cysteine 74 and cysteine 162 are oxidised to a cystine. An N-linked (GlcNAc...) asparagine glycan is attached at asparagine 165.

This sequence belongs to the multicopper oxidase family. In terms of assembly, monomer. It depends on Cu cation as a cofactor.

It is found in the secreted. The enzyme catalyses 4 hydroquinone + O2 = 4 benzosemiquinone + 2 H2O. Its activity is regulated as follows. Activity is strongly promoted by toluene. Activity is promoted by magnesium, potassium, cadmium, zinc, nickel, sodium, lead and manganese ions. Completely inhibited by IAA (cysteine protease inhibitor), PMSF (serine protease inhibitor), DEP (histidine protease inhibitor) and NAI (tyrosine protease inhibitor). Inhibited by ethanol, acetone, SDS, and EDTA. Activity is strongly inhibited by mercury ions. Also inhibited by lithium, aluminum, calcium, barium and iron ions. Functionally, lignin degradation and detoxification of lignin-derived products. Has activity towards 2,2'-azino-bis(3-ethylbenzothiazoline-6-sulfonic acid) (ABTS). The sequence is that of Laccase-S from Trametes hirsuta (White-rot fungus).